The following is a 76-amino-acid chain: Acyl carrier protein (76 aa).

One can recognise a Carrier domain in the interval 2 to 76 (KDNFTRLQSI…QDVLNYLERN (75 aa)). Serine 37 is modified (O-(pantetheine 4'-phosphoryl)serine).

Belongs to the acyl carrier protein (ACP) family. 4'-phosphopantetheine is transferred from CoA to a specific serine of apo-ACP by AcpS. This modification is essential for activity because fatty acids are bound in thioester linkage to the sulfhydryl of the prosthetic group.

The protein localises to the plastid. Its subcellular location is the chloroplast. Its pathway is lipid metabolism; fatty acid biosynthesis. Carrier of the growing fatty acid chain in fatty acid biosynthesis. The chain is Acyl carrier protein from Phaeodactylum tricornutum (strain CCAP 1055/1).